The chain runs to 782 residues: E3 ubiquitin-protein ligase SopA (782 aa).

A disordered region spans residues 137–171; sequence VSVSANNRPTVSEGRTPPVSPSLSLQATSSPSSPA. The segment covering 157–171 has biased composition (low complexity); sequence PSLSLQATSSPSSPA. Residue cysteine 753 is the Glycyl thioester intermediate of the active site.

This sequence belongs to the SopA E3 ligase family. In terms of processing, ubiquitinated in the presence of host E1 ubiquitin-activating enzyme, E2 ubiquitin-conjugating enzyme and ubiquitin.

The protein localises to the secreted. Its subcellular location is the host cell. The enzyme catalyses S-ubiquitinyl-[E2 ubiquitin-conjugating enzyme]-L-cysteine + [acceptor protein]-L-lysine = [E2 ubiquitin-conjugating enzyme]-L-cysteine + N(6)-ubiquitinyl-[acceptor protein]-L-lysine.. Its function is as follows. Effector proteins function to alter host cell physiology and promote bacterial survival in host tissues. This protein is an E3 ubiquitin ligase that interferes with host's ubiquitination pathway. For instance, prevents host innate immune response by ubiquitinating and thus sending to degradation host E3 ubiquitin ligases TRIM56 and TRIM65. The protein is E3 ubiquitin-protein ligase SopA (sopA) of Salmonella typhimurium (strain 14028s / SGSC 2262).